The chain runs to 605 residues: Ankyrin repeat domain-containing protein 13D (605 aa).

2 ANK repeats span residues 39-68 (RGRTPLELAVSLGNLESVRVLLRHNANVGK) and 72-101 (QGWAVLQEAVSTGDPEMVQLVLQYRDYQRA). Residues 306 to 333 (AQQHSSHTGAPVQQAASPTNPTAISPEE) are disordered. A compositionally biased stretch (polar residues) spans 319-328 (QAASPTNPTA). 2 UIM domains span residues 482–501 (EDDDLLQFAIQQSLLEAGTE) and 528–547 (EEQLQLERALQESLQLSTEP). Positions 541 to 605 (LQLSTEPRGP…RILQLSLTEH (65 aa)) are disordered. The span at 550-563 (PGSPPRTPPAPGPP) shows a compositional bias: pro residues. Position 552 is a phosphoserine (Ser552). Thr556 carries the phosphothreonine modification. Positions 564–575 (SFEEQLRLALEL) are enriched in low complexity. UIM domains lie at 564-583 (SFEEQLRLALELSSREQEER) and 589-605 (QEEEDLQRILQLSLTEH). Residues 576 to 589 (SSREQEERERRGQQ) are compositionally biased toward basic and acidic residues.

Interacts with EGFR (ubiquitinated); the interaction is direct and may regulate EGFR internalization.

The protein localises to the cell membrane. It localises to the late endosome. In terms of biological role, ubiquitin-binding protein that specifically recognizes and binds 'Lys-63'-linked ubiquitin. Does not bind 'Lys-48'-linked ubiquitin. Positively regulates the internalization of ligand-activated EGFR by binding to the Ub moiety of ubiquitinated EGFR at the cell membrane. The sequence is that of Ankyrin repeat domain-containing protein 13D (ANKRD13D) from Homo sapiens (Human).